The primary structure comprises 175 residues: Protein LHCP TRANSLOCATION DEFECT (175 aa).

Residues 1-68 (MASSSISFSC…WFKFGKNGVD (68 aa)) constitute a chloroplast transit peptide. One copy of the ANK repeat lies at 117–149 (PVDILLMLAATEGDRPKIEELLKAGADYSVKDA).

In terms of assembly, interacts with CAO/cpSRP43, but is not a component of the transit complex. Interacts with LHCP (via T14 domain), TIC40 and TIC110. Highly expressed in leaves and seedlings. Detected in roots, but not in germinating seeds.

It is found in the plastid. The protein localises to the chloroplast thylakoid membrane. It localises to the chloroplast envelope. Its subcellular location is the chloroplast stroma. Its function is as follows. Involved in the import of light-harvesting complex proteins (LHCP) and subsequent routing of these proteins to the chloroplast signal recognition particle (SRP) pathway. The sequence is that of Protein LHCP TRANSLOCATION DEFECT (LTD) from Arabidopsis thaliana (Mouse-ear cress).